Reading from the N-terminus, the 373-residue chain is Peptidoglycan recognition protein 4 (373 aa).

A signal peptide spans 1–17 (MLPWLLVFSALGIQAWG). Residues N22, N39, N109, N145, and N247 are each glycosylated (N-linked (GlcNAc...) asparagine). N-acetylmuramoyl-L-alanine amidase domains are found at residues 74-212 (TPVN…ACPG) and 235-358 (YGII…LSPG). Cystine bridges form between C210–C332, C226–C270, and C246–C252. The peptidoglycan site is built by Y263 and Y274. Interaction with murein stretches follow at residues 293–302 (QGSSTPGYDD) and 353–354 (RT).

Belongs to the N-acetylmuramoyl-L-alanine amidase 2 family. Homodimer; disulfide-linked. Heterodimer with PGLYRP3; disulfide-linked. In terms of processing, N-glycosylated. Detected in skin epidermis, eccrine sweat glands and ducts, mucous cells in the submandibular salivary gland, mucous cells in the throat, ciliary body epithelial cells of the eye, small intestine, colon, stomach and in mature epithelial cells of the tongue (at protein level). High expression in skin and esophagus. Expressed also to a much lesser extent in the tonsils and thymus.

The protein resides in the secreted. In terms of biological role, pattern receptor that binds to murein peptidoglycans (PGN) of Gram-positive bacteria. Has bactericidal activity towards Gram-positive bacteria. May kill Gram-positive bacteria by interfering with peptidoglycan biosynthesis. Also binds to Gram-negative bacteria, and has bacteriostatic activity towards Gram-negative bacteria. Plays a role in innate immunity. This Homo sapiens (Human) protein is Peptidoglycan recognition protein 4 (PGLYRP4).